The primary structure comprises 320 residues: 4-diphosphocytidyl-2-C-methyl-D-erythritol kinase (320 aa).

Lys26 is a catalytic residue. ATP is bound at residue 111-121; it reads PVAGGMAGGSA. Asp153 is a catalytic residue.

It belongs to the GHMP kinase family. IspE subfamily.

It carries out the reaction 4-CDP-2-C-methyl-D-erythritol + ATP = 4-CDP-2-C-methyl-D-erythritol 2-phosphate + ADP + H(+). Its pathway is isoprenoid biosynthesis; isopentenyl diphosphate biosynthesis via DXP pathway; isopentenyl diphosphate from 1-deoxy-D-xylulose 5-phosphate: step 3/6. In terms of biological role, catalyzes the phosphorylation of the position 2 hydroxy group of 4-diphosphocytidyl-2C-methyl-D-erythritol. The polypeptide is 4-diphosphocytidyl-2-C-methyl-D-erythritol kinase (Mycobacterium marinum (strain ATCC BAA-535 / M)).